Reading from the N-terminus, the 166-residue chain is 3-isopropylmalate dehydratase small subunit (166 aa).

This sequence belongs to the LeuD family. LeuD type 2 subfamily. In terms of assembly, heterodimer of LeuC and LeuD.

It catalyses the reaction (2R,3S)-3-isopropylmalate = (2S)-2-isopropylmalate. Its pathway is amino-acid biosynthesis; L-leucine biosynthesis; L-leucine from 3-methyl-2-oxobutanoate: step 2/4. Its function is as follows. Catalyzes the isomerization between 2-isopropylmalate and 3-isopropylmalate, via the formation of 2-isopropylmaleate. The polypeptide is 3-isopropylmalate dehydratase small subunit (Moorella thermoacetica (strain ATCC 39073 / JCM 9320)).